Consider the following 264-residue polypeptide: Apolipoprotein A-I (264 aa).

A signal peptide spans Met-1–Ala-18. Tandem repeats lie at residues Leu-67–Ala-88 and Pro-89–Thr-110. A 10 X approximate tandem repeats region spans residues Leu-67–Ala-264. One copy of the 3; half-length repeat lies at Lys-111–Arg-121. 5 repeat units span residues Pro-122–Thr-143, Pro-144–Thr-165, Pro-166–Ala-187, Pro-188–Ile-209, and Pro-210–Thr-231. One copy of the 9; half-length repeat lies at Pro-232–Thr-242. Repeat unit 10 spans residues Pro-243–Ala-264.

Belongs to the apolipoprotein A1/A4/E family. Homodimer. In terms of tissue distribution, major protein of plasma HDL, also found in chylomicrons.

It localises to the secreted. Participates in the reverse transport of cholesterol from tissues to the liver for excretion by promoting cholesterol efflux from tissues and by acting as a cofactor for the lecithin cholesterol acyltransferase (LCAT). This is Apolipoprotein A-I (APOA1) from Gallus gallus (Chicken).